The primary structure comprises 376 residues: Partitioning defective 6 homolog gamma (376 aa).

The PB1 domain occupies 18–98 (AVEVKSKFGA…PLLRVFIQKR (81 aa)). An interaction with PARD3 and CDC42 region spans residues 127-254 (RRRAHLDIGL…VTVKPANQRN (128 aa)). The Pseudo-CRIB domain occupies 134–151 (IGLPRDFRPVSSIIDVDL). The region spanning 158–251 (RVRLHRHGCE…NLIVTVKPAN (94 aa)) is the PDZ domain. The disordered stretch occupies residues 356–376 (PRHSLALPPGGVEEHGPAVTL). A compositionally biased stretch (basic and acidic residues) spans 367-376 (VEEHGPAVTL).

This sequence belongs to the PAR6 family. In terms of assembly, interacts with PARD3. Interacts with GTP-bound forms of CDC42, RHOQ/TC10 and RAC1. Interacts with the N-terminal part of PRKCI and PRKCZ. Widely expressed, with a higher expression in fetal and adult kidney.

Its subcellular location is the cytoplasm. The protein localises to the cell membrane. It localises to the cell junction. The protein resides in the tight junction. Adapter protein involved in asymmetrical cell division and cell polarization processes. May play a role in the formation of epithelial tight junctions. The PARD6-PARD3 complex links GTP-bound Rho small GTPases to atypical protein kinase C proteins. In Homo sapiens (Human), this protein is Partitioning defective 6 homolog gamma (PARD6G).